Here is a 71-residue protein sequence, read N- to C-terminus: UPF0346 protein SP70585_0986 (71 aa).

It belongs to the UPF0346 family.

The chain is UPF0346 protein SP70585_0986 from Streptococcus pneumoniae (strain 70585).